Consider the following 199-residue polypeptide: Casparian strip membrane protein 1 (199 aa).

At 1-37 (MKSESAAIDIPESSSVAKGKAPLIAVSRNEKGGYRKG) the chain is on the cytoplasmic side. A helical membrane pass occupies residues 38–58 (IAIFDFILRLAAIATALAAAA). The Extracellular portion of the chain corresponds to 59–87 (AMGTSDETLPFFTQFFQFQASYDDLPTFQ). A helical transmembrane segment spans residues 88 to 108 (FFVIAIAIVGGYLVLSLPFSI). Residues 109-120 (VAIVRPHAVGPR) are Cytoplasmic-facing. Residues 121 to 141 (LLLIILDAVALTLNTAAGAAA) form a helical membrane-spanning segment. The Extracellular segment spans residues 142–173 (AAIVYLAHNGNSNTNWLAICQQYGDFCQKVSG). A helical membrane pass occupies residues 174–194 (AVVASFITVVIFVFLIVLSAF). The Cytoplasmic portion of the chain corresponds to 195–199 (ALRRH).

Belongs to the Casparian strip membrane proteins (CASP) family. Homodimer and heterodimers.

The protein resides in the cell membrane. Its function is as follows. Regulates membrane-cell wall junctions and localized cell wall deposition. Required for establishment of the Casparian strip membrane domain (CSD) and the subsequent formation of Casparian strips, a cell wall modification of the root endodermis that determines an apoplastic barrier between the intraorganismal apoplasm and the extraorganismal apoplasm and prevents lateral diffusion. This Populus trichocarpa (Western balsam poplar) protein is Casparian strip membrane protein 1.